A 488-amino-acid chain; its full sequence is Monodehydroascorbate reductase 4, peroxisomal (488 aa).

Topologically, residues 1–3 are cytoplasmic; it reads MGR. The helical transmembrane segment at 4-24 threads the bilayer; it reads AFVYVILGGGVAAGYAALEFT. Residues 12-15, Glu39, Arg46, Lys51, and 145-146 contribute to the FAD site; these read GGVA and RD. At 25–458 the chain is on the peroxisomal side; it reads RRGVSDGELC…SASVVMIKKP (434 aa). NAD(+) is bound by residues 170-176, Glu194, Arg200, and Gly259; that span reads GGYIGME. 172–176 contributes to the NADP(+) binding site; that stretch reads YIGME. 2 residues coordinate NADP(+): Arg200 and Gly259. Asp296 is a binding site for FAD. An NAD(+)-binding site is contributed by 312–313; that stretch reads EH. 312–313 serves as a coordination point for NADP(+); the sequence is EH. Val314 is an FAD binding site. Residue Arg318 participates in L-ascorbate binding. Residue Tyr344 coordinates FAD. Position 344 (Tyr344) interacts with NAD(+). Tyr344 provides a ligand contact to NADP(+). An L-ascorbate-binding site is contributed by Arg346. The helical transmembrane segment at 459-479 threads the bilayer; the sequence is LYVWHAATGVVVAASVAAFAF. Topologically, residues 480–488 are cytoplasmic; that stretch reads WYGRRRRRW.

It belongs to the FAD-dependent oxidoreductase family. FAD is required as a cofactor.

Its subcellular location is the peroxisome membrane. The enzyme catalyses 2 monodehydro-L-ascorbate radical + NADH + H(+) = 2 L-ascorbate + NAD(+). Functionally, catalyzes the conversion of monodehydroascorbate to ascorbate, oxidizing NADH in the process. Involved in the detoxification of H(2)O(2) that escapes the peroxisome and causes oxidative damage to oil bodies. The protein is Monodehydroascorbate reductase 4, peroxisomal of Arabidopsis thaliana (Mouse-ear cress).